An 807-amino-acid chain; its full sequence is Microbial collagenase (807 aa).

The first 27 residues, 1–27 (MSHLLPFPRRRLALACLLASISGASFG), serve as a signal peptide directing secretion. His-434 contacts Zn(2+). Residue Glu-435 is part of the active site. Position 438 (His-438) interacts with Zn(2+). Residues 562-585 (EVTPENPDTDPDTPTEPSDGVTQL) are disordered.

It belongs to the peptidase M9A family. The cofactor is Zn(2+).

It localises to the secreted. It carries out the reaction Digestion of native collagen in the triple helical region at Xaa-|-Gly bonds. With synthetic peptides, a preference is shown for Gly at P3 and P1', Pro and Ala at P2 and P2', and hydroxyproline, Ala or Arg at P3'.. Possesses gelatinolytic activity. The sequence is that of Microbial collagenase from Vibrio vulnificus (strain CMCP6).